We begin with the raw amino-acid sequence, 314 residues long: Glycerol-3-phosphate dehydrogenase [NAD(P)+] (314 aa).

3 residues coordinate NADPH: F11, R30, and K96. Sn-glycerol 3-phosphate contacts are provided by K96, G124, and S126. A128 contributes to the NADPH binding site. Residues K179, D232, S242, R243, and N244 each coordinate sn-glycerol 3-phosphate. The active-site Proton acceptor is K179. Position 243 (R243) interacts with NADPH. E264 contacts NADPH.

This sequence belongs to the NAD-dependent glycerol-3-phosphate dehydrogenase family.

Its subcellular location is the cytoplasm. The catalysed reaction is sn-glycerol 3-phosphate + NAD(+) = dihydroxyacetone phosphate + NADH + H(+). It carries out the reaction sn-glycerol 3-phosphate + NADP(+) = dihydroxyacetone phosphate + NADPH + H(+). It functions in the pathway membrane lipid metabolism; glycerophospholipid metabolism. Catalyzes the reduction of the glycolytic intermediate dihydroxyacetone phosphate (DHAP) to sn-glycerol 3-phosphate (G3P), the key precursor for phospholipid synthesis. In Paracoccus denitrificans (strain Pd 1222), this protein is Glycerol-3-phosphate dehydrogenase [NAD(P)+].